Reading from the N-terminus, the 101-residue chain is Ubiquitin-related modifier 1 homolog (101 aa).

Glycine 101 carries the post-translational modification 1-thioglycine. A Glycyl lysine isopeptide (Gly-Lys) (interchain with K-? in acceptor proteins) cross-link involves residue glycine 101.

It belongs to the URM1 family. Interacts with cer. C-terminal thiocarboxylation occurs in 2 steps, it is first acyl-adenylated (-COAMP) via the hesA/moeB/thiF part of the MOCS3 homolog, then thiocarboxylated (-COSH) via the rhodanese domain of the MOCS3 homolog.

It localises to the cytoplasm. The protein operates within tRNA modification; 5-methoxycarbonylmethyl-2-thiouridine-tRNA biosynthesis. Acts as a sulfur carrier required for 2-thiolation of mcm(5)S(2)U at tRNA wobble positions of cytosolic tRNA(Lys), tRNA(Glu) and tRNA(Gln). Serves as sulfur donor in tRNA 2-thiolation reaction by being thiocarboxylated (-COSH) at its C-terminus by MOCS3. The sulfur is then transferred to tRNA to form 2-thiolation of mcm(5)S(2)U. Also acts as a ubiquitin-like protein (UBL) that is covalently conjugated via an isopeptide bond to lysine residues of target proteins such as Prx2/Jafrac1, Ciao1, Eip71CD and GILT1. The thiocarboxylated form serves as substrate for conjugation and oxidative stress specifically induces the formation of UBL-protein conjugates. The sequence is that of Ubiquitin-related modifier 1 homolog from Drosophila ananassae (Fruit fly).